Consider the following 206-residue polypeptide: Thymidylate kinase (206 aa).

Gly-11–Thr-18 is a binding site for ATP.

Belongs to the thymidylate kinase family.

The enzyme catalyses dTMP + ATP = dTDP + ADP. Functionally, phosphorylation of dTMP to form dTDP in both de novo and salvage pathways of dTTP synthesis. The chain is Thymidylate kinase from Burkholderia thailandensis (strain ATCC 700388 / DSM 13276 / CCUG 48851 / CIP 106301 / E264).